Reading from the N-terminus, the 137-residue chain is Nucleoside diphosphate kinase (137 aa).

Residues K9, F57, R85, T91, R102, and N112 each coordinate ATP. Residue H115 is the Pros-phosphohistidine intermediate of the active site.

The protein belongs to the NDK family. As to quaternary structure, homotetramer. Mg(2+) serves as cofactor.

It is found in the cytoplasm. It carries out the reaction a 2'-deoxyribonucleoside 5'-diphosphate + ATP = a 2'-deoxyribonucleoside 5'-triphosphate + ADP. The enzyme catalyses a ribonucleoside 5'-diphosphate + ATP = a ribonucleoside 5'-triphosphate + ADP. Its function is as follows. Major role in the synthesis of nucleoside triphosphates other than ATP. The ATP gamma phosphate is transferred to the NDP beta phosphate via a ping-pong mechanism, using a phosphorylated active-site intermediate. This chain is Nucleoside diphosphate kinase, found in Campylobacter jejuni subsp. jejuni serotype O:23/36 (strain 81-176).